Reading from the N-terminus, the 519-residue chain is Apolipoprotein N-acyltransferase (519 aa).

Helical transmembrane passes span 6 to 26, 47 to 67, 83 to 103, 126 to 146, 174 to 194, and 206 to 226; these read APLG…IWIF, LTAI…ITGV, IAAF…FVWL, LFIL…SHSI, LLSA…IDFL, and WHYF…GWLL. The CN hydrolase domain occupies 244 to 482; that stretch reads IQGNIPNQIK…YEIHAAPIYR (239 aa). The active-site Proton acceptor is Glu-285. The active site involves Lys-343. Residue Cys-394 is the Nucleophile of the active site. A helical transmembrane segment spans residues 496–516; sequence VVFLLLVVSAIAWLYQIVFPL.

The protein belongs to the CN hydrolase family. Apolipoprotein N-acyltransferase subfamily.

Its subcellular location is the cell inner membrane. It catalyses the reaction N-terminal S-1,2-diacyl-sn-glyceryl-L-cysteinyl-[lipoprotein] + a glycerophospholipid = N-acyl-S-1,2-diacyl-sn-glyceryl-L-cysteinyl-[lipoprotein] + a 2-acyl-sn-glycero-3-phospholipid + H(+). It functions in the pathway protein modification; lipoprotein biosynthesis (N-acyl transfer). Catalyzes the phospholipid dependent N-acylation of the N-terminal cysteine of apolipoprotein, the last step in lipoprotein maturation. The chain is Apolipoprotein N-acyltransferase from Synechocystis sp. (strain ATCC 27184 / PCC 6803 / Kazusa).